Here is a 70-residue protein sequence, read N- to C-terminus: Small ribosomal subunit protein bS21 (70 aa).

This sequence belongs to the bacterial ribosomal protein bS21 family.

This chain is Small ribosomal subunit protein bS21, found in Helicobacter pylori (strain P12).